Reading from the N-terminus, the 136-residue chain is ATP synthase epsilon chain (136 aa).

The segment at 112–136 is disordered; that stretch reads GNSADKLKAKESLNKARARSQAVGE. Residues 116-125 are compositionally biased toward basic and acidic residues; that stretch reads DKLKAKESLN.

The protein belongs to the ATPase epsilon chain family. As to quaternary structure, F-type ATPases have 2 components, CF(1) - the catalytic core - and CF(0) - the membrane proton channel. CF(1) has five subunits: alpha(3), beta(3), gamma(1), delta(1), epsilon(1). CF(0) has three main subunits: a, b and c.

The protein resides in the cellular thylakoid membrane. Functionally, produces ATP from ADP in the presence of a proton gradient across the membrane. This Prochlorococcus marinus (strain SARG / CCMP1375 / SS120) protein is ATP synthase epsilon chain.